Reading from the N-terminus, the 123-residue chain is Large ribosomal subunit protein uL14 (123 aa).

It belongs to the universal ribosomal protein uL14 family. As to quaternary structure, part of the 50S ribosomal subunit. Forms a cluster with proteins L3 and L19. In the 70S ribosome, L14 and L19 interact and together make contacts with the 16S rRNA in bridges B5 and B8.

Functionally, binds to 23S rRNA. Forms part of two intersubunit bridges in the 70S ribosome. This Buchnera aphidicola subsp. Cinara cedri (strain Cc) protein is Large ribosomal subunit protein uL14.